Consider the following 352-residue polypeptide: Nicotinate-nucleotide--dimethylbenzimidazole phosphoribosyltransferase (352 aa).

The active-site Proton acceptor is Glu316.

Belongs to the CobT family.

The enzyme catalyses 5,6-dimethylbenzimidazole + nicotinate beta-D-ribonucleotide = alpha-ribazole 5'-phosphate + nicotinate + H(+). It participates in nucleoside biosynthesis; alpha-ribazole biosynthesis; alpha-ribazole from 5,6-dimethylbenzimidazole: step 1/2. In terms of biological role, catalyzes the synthesis of alpha-ribazole-5'-phosphate from nicotinate mononucleotide (NAMN) and 5,6-dimethylbenzimidazole (DMB). This is Nicotinate-nucleotide--dimethylbenzimidazole phosphoribosyltransferase from Yersinia enterocolitica serotype O:8 / biotype 1B (strain NCTC 13174 / 8081).